The sequence spans 385 residues: Bifunctional chorismate mutase/prephenate dehydratase (385 aa).

The Chorismate mutase domain occupies 1–92; that stretch reads MPSKNDLLSF…ESVLTQKKLL (92 aa). Positions 11, 28, 39, 48, 52, 84, and 88 each coordinate substrate. The region spanning 105-285 is the Prephenate dehydratase domain; the sequence is SFSFLGPKGS…NITRFILLSR (181 aa). The interval 286–385 is regulatory; it reads KPVSISSKIP…PSENITPIIP (100 aa). One can recognise an ACT domain in the interval 299–376; it reads TLIFNTGQES…KFIKILGCYP (78 aa).

It is found in the cytoplasm. It carries out the reaction chorismate = prephenate. The catalysed reaction is prephenate + H(+) = 3-phenylpyruvate + CO2 + H2O. The protein operates within amino-acid biosynthesis; L-phenylalanine biosynthesis; phenylpyruvate from prephenate: step 1/1. It functions in the pathway metabolic intermediate biosynthesis; prephenate biosynthesis; prephenate from chorismate: step 1/1. Catalyzes the Claisen rearrangement of chorismate to prephenate and the decarboxylation/dehydration of prephenate to phenylpyruvate. The chain is Bifunctional chorismate mutase/prephenate dehydratase (pheA) from Buchnera aphidicola subsp. Schizaphis graminum (strain Sg).